The sequence spans 65 residues: Metallothionein (65 aa).

This sequence belongs to the metallothionein superfamily. Type 4 family.

Functionally, metallothioneins have a high content of cysteine residues that bind various heavy metals. In Paracentrotus lividus (Common sea urchin), this protein is Metallothionein.